Reading from the N-terminus, the 130-residue chain is Large ribosomal subunit protein eL22 (130 aa).

It belongs to the eukaryotic ribosomal protein eL22 family.

In Caenorhabditis elegans, this protein is Large ribosomal subunit protein eL22 (rpl-22).